The primary structure comprises 80 residues: Exodeoxyribonuclease 7 small subunit (80 aa).

It belongs to the XseB family. In terms of assembly, heterooligomer composed of large and small subunits.

The protein localises to the cytoplasm. It carries out the reaction Exonucleolytic cleavage in either 5'- to 3'- or 3'- to 5'-direction to yield nucleoside 5'-phosphates.. Its function is as follows. Bidirectionally degrades single-stranded DNA into large acid-insoluble oligonucleotides, which are then degraded further into small acid-soluble oligonucleotides. This is Exodeoxyribonuclease 7 small subunit from Rickettsia canadensis (strain McKiel).